A 457-amino-acid polypeptide reads, in one-letter code: ATP-dependent protease ATPase subunit HslU (457 aa).

Residues Val21, 63 to 68 (GVGKTE), Asp269, Glu335, and Arg407 each bind ATP.

It belongs to the ClpX chaperone family. HslU subfamily. In terms of assembly, a double ring-shaped homohexamer of HslV is capped on each side by a ring-shaped HslU homohexamer. The assembly of the HslU/HslV complex is dependent on binding of ATP.

The protein resides in the cytoplasm. ATPase subunit of a proteasome-like degradation complex; this subunit has chaperone activity. The binding of ATP and its subsequent hydrolysis by HslU are essential for unfolding of protein substrates subsequently hydrolyzed by HslV. HslU recognizes the N-terminal part of its protein substrates and unfolds these before they are guided to HslV for hydrolysis. This is ATP-dependent protease ATPase subunit HslU from Desulfotalea psychrophila (strain LSv54 / DSM 12343).